The chain runs to 224 residues: Lipoprotein-releasing system ATP-binding protein LolD (224 aa).

The ABC transporter domain occupies 5 to 224 (LVLDGLTKAY…VVRLEAGRVV (220 aa)). Residue 42-49 (APSGAGKS) coordinates ATP.

This sequence belongs to the ABC transporter superfamily. Lipoprotein translocase (TC 3.A.1.125) family. As to quaternary structure, the complex is composed of two ATP-binding proteins (LolD) and two transmembrane proteins (LolC and LolE).

It is found in the cell inner membrane. In terms of biological role, part of the ABC transporter complex LolCDE involved in the translocation of mature outer membrane-directed lipoproteins, from the inner membrane to the periplasmic chaperone, LolA. Responsible for the formation of the LolA-lipoprotein complex in an ATP-dependent manner. In Cereibacter sphaeroides (strain ATCC 17023 / DSM 158 / JCM 6121 / CCUG 31486 / LMG 2827 / NBRC 12203 / NCIMB 8253 / ATH 2.4.1.) (Rhodobacter sphaeroides), this protein is Lipoprotein-releasing system ATP-binding protein LolD.